We begin with the raw amino-acid sequence, 190 residues long: Segregation and condensation protein B (190 aa).

The protein belongs to the ScpB family. In terms of assembly, homodimer. Homodimerization may be required to stabilize the binding of ScpA to the Smc head domains. Component of a cohesin-like complex composed of ScpA, ScpB and the Smc homodimer, in which ScpA and ScpB bind to the head domain of Smc. The presence of the three proteins is required for the association of the complex with DNA.

The protein resides in the cytoplasm. Participates in chromosomal partition during cell division. May act via the formation of a condensin-like complex containing Smc and ScpA that pull DNA away from mid-cell into both cell halves. The polypeptide is Segregation and condensation protein B (Bacillus cereus (strain ZK / E33L)).